Here is a 520-residue protein sequence, read N- to C-terminus: Keratin, type II cytoskeletal 8 (520 aa).

Residues 1 to 19 are compositionally biased toward low complexity; sequence MSTYSKKTSYTVKSSSSGS. The disordered stretch occupies residues 1–20; that stretch reads MSTYSKKTSYTVKSSSSGSI. The head stretch occupies residues 2 to 114; it reads STYSKKTSYT…DPNIQIVRTQ (113 aa). Ser-28 is modified (phosphoserine). The coil 1A stretch occupies residues 115 to 150; that stretch reads EKEQIKTLNNRFASFIDKVRFLEQQNKMLETKWSLL. The region spanning 115–426 is the IF rod domain; the sequence is EKEQIKTLNN…KLLEGEEDRL (312 aa). The segment at 151 to 166 is linker 1; it reads QNQTATRSNIDAMFEA. Residues 168-259 are coil 1B; the sequence is IANLRRQLDS…QIFEEEIREL (92 aa). A linker 12 region spans residues 260–283; sequence QSQIKDTSVVVEMDNSRNLDMDAI. Positions 284-422 are coil 2; the sequence is VAEVRAQYED…ATYRKLLEGE (139 aa). The tail stretch occupies residues 423-520; the sequence is EDRLATGIKA…VSESSEVVQD (98 aa).

It belongs to the intermediate filament family. In terms of assembly, heterotetramer of two type I and two type II keratins. Keratin-8 associates with keratin-18. As to expression, expressed in simple epithelia.

Its subcellular location is the cytoplasm. The protein resides in the nucleus. The protein localises to the nucleoplasm. It localises to the nucleus matrix. Its function is as follows. Together with KRT19, helps to link the contractile apparatus to dystrophin at the costameres of striated muscle. This chain is Keratin, type II cytoskeletal 8, found in Danio rerio (Zebrafish).